Reading from the N-terminus, the 306-residue chain is Lipoyl synthase (306 aa).

[4Fe-4S] cluster contacts are provided by cysteine 52, cysteine 57, cysteine 63, cysteine 78, cysteine 82, cysteine 85, and serine 289. A Radical SAM core domain is found at 64–278; sequence WNRKTATYML…KETAYKIGFK (215 aa).

Belongs to the radical SAM superfamily. Lipoyl synthase family. Requires [4Fe-4S] cluster as cofactor.

The protein resides in the cytoplasm. It carries out the reaction [[Fe-S] cluster scaffold protein carrying a second [4Fe-4S](2+) cluster] + N(6)-octanoyl-L-lysyl-[protein] + 2 oxidized [2Fe-2S]-[ferredoxin] + 2 S-adenosyl-L-methionine + 4 H(+) = [[Fe-S] cluster scaffold protein] + N(6)-[(R)-dihydrolipoyl]-L-lysyl-[protein] + 4 Fe(3+) + 2 hydrogen sulfide + 2 5'-deoxyadenosine + 2 L-methionine + 2 reduced [2Fe-2S]-[ferredoxin]. It functions in the pathway protein modification; protein lipoylation via endogenous pathway; protein N(6)-(lipoyl)lysine from octanoyl-[acyl-carrier-protein]: step 2/2. Its function is as follows. Catalyzes the radical-mediated insertion of two sulfur atoms into the C-6 and C-8 positions of the octanoyl moiety bound to the lipoyl domains of lipoate-dependent enzymes, thereby converting the octanoylated domains into lipoylated derivatives. In Leptospira biflexa serovar Patoc (strain Patoc 1 / Ames), this protein is Lipoyl synthase.